A 38-amino-acid polypeptide reads, in one-letter code: Large ribosomal subunit protein bL36 (38 aa).

Belongs to the bacterial ribosomal protein bL36 family.

The sequence is that of Large ribosomal subunit protein bL36 from Psychrobacter cryohalolentis (strain ATCC BAA-1226 / DSM 17306 / VKM B-2378 / K5).